We begin with the raw amino-acid sequence, 205 residues long: ATP synthase subunit b (205 aa).

The N-terminal stretch at 1 to 27 is a signal peptide; that stretch reads MKLNKKHLVAILSVLSLSIIVVPLLTS. C28 carries N-palmitoyl cysteine lipidation. C28 carries S-diacylglycerol cysteine lipidation. The chain crosses the membrane as a helical span at residues 48 to 68; sequence VWVFIAQVIAMCVVFSLVLWL.

It belongs to the ATPase B chain family. In terms of assembly, F-type ATPases have 2 components, F(1) - the catalytic core - and F(0) - the membrane proton channel. F(1) has five subunits: alpha(3), beta(3), gamma(1), delta(1), epsilon(1). F(0) has three main subunits: a(1), b(2) and c(10-14). The alpha and beta chains form an alternating ring which encloses part of the gamma chain. F(1) is attached to F(0) by a central stalk formed by the gamma and epsilon chains, while a peripheral stalk is formed by the delta and b chains.

Its subcellular location is the cell membrane. F(1)F(0) ATP synthase produces ATP from ADP in the presence of a proton or sodium gradient. F-type ATPases consist of two structural domains, F(1) containing the extramembraneous catalytic core and F(0) containing the membrane proton channel, linked together by a central stalk and a peripheral stalk. During catalysis, ATP synthesis in the catalytic domain of F(1) is coupled via a rotary mechanism of the central stalk subunits to proton translocation. In terms of biological role, component of the F(0) channel, it forms part of the peripheral stalk, linking F(1) to F(0). The chain is ATP synthase subunit b from Ureaplasma parvum serovar 3 (strain ATCC 27815 / 27 / NCTC 11736).